The primary structure comprises 859 residues: MSNFWDNNKGSIMSGLASAGKYGYQGTKYVAKAGYKASKTHYNNSQGKKNVEESSDEGYMSESASDLSHLQDPKMFPPPPLKPGQKQISSDGTVIDAGNAPLVHTAAVPMANAASHPGLPPRTPTANSIPMLTQQQTYPPQNMYQQQPPPQPPMQQQVPPQVQQIPQPGQQLSQQPMQQLHPEPIPPRNYQTAVETPPQYTPIPSLNAQHVQEQLQQQLQQQFQPSMGTPDQGQALVQGSPLASQQQVQPQVQPQTSQYQSQQVPSPQIQNQGQLMQQQQNYFQPQLQQTQPQQYIDSYAQYQQQGQQQVQPQIQQMQPQVQQQPIQQPPQAQPQYQQSYPPQYQQQTQSLQPQYQQPVQAPIVQPPIPQQDYYQQQQQTPYQPASQPQMYQQQPGQQNPIVSPAPALAQRPSLSNIQTSTGHGASQESTVSSTASITVKPYVWMDSDERKEKKKIELQPVSAIDIHQVTPPLHKDRSSSSSLKSSSRDASVLEKGKSLSPGPAPLPSRNVRPPTSVDHTKPNTVTPAAATGTSAEVGDDQVRPNESITGVYHESTVSFPPPPKPTHNGLPMSPPVSHARPTVSHKPPNPPRPPVSSKPTLPPIQTHQRITSTERAPIGRPKEEVHQAAVLGAYNYNVDVGFAPPPKPPRSMVTSPANDPQTSLSSRRPSQEYGGVAKASSRTLPPPPGQQNGSLPQHTEEEPASNSSESAPPAMRMLPLADLPPPPQRTDSHTTTSEQPAVPSRTFDPPPRYSTNETIPPTYNIDEDIQTAHKKPPPKVPKKKVSLRAGNKPPVPKKKASLSGTATHEHNESARTSLTQETNNSIDDDDDDDSGEGNSFRKYLRHVVPAERDHIHKSK.

Disordered regions lie at residues 38–95, 137–290, 320–358, 372–624, and 638–859; these read SKTH…GTVI, TYPP…LQQT, QVQQ…YQQP, DYYQ…PKEE, and VDVG…HKSK. Composition is skewed to low complexity over residues 137–146, 154–179, and 209–224; these read TYPPQNMYQQ, MQQQ…PMQQ, and QHVQ…QQFQ. Residues 225–237 are compositionally biased toward polar residues; the sequence is PSMGTPDQGQALV. Low complexity-rich tracts occupy residues 240–290, 333–358, and 372–400; these read SPLA…LQQT, QPQY…YQQP, and DYYQ…QQNP. The span at 412-437 shows a compositional bias: polar residues; it reads PSLSNIQTSTGHGASQESTVSSTASI. Residues 447–457 are compositionally biased toward basic and acidic residues; that stretch reads SDERKEKKKIE. Low complexity predominate over residues 479 to 490; that stretch reads SSSSLKSSSRDA. A compositionally biased stretch (polar residues) spans 522–534; that stretch reads PNTVTPAAATGTS. Residues 587–602 are compositionally biased toward pro residues; that stretch reads PPNPPRPPVSSKPTLP. Polar residues-rich tracts occupy residues 605 to 614 and 652 to 668; these read QTHQRITSTE and MVTS…SSRR. Low complexity predominate over residues 704–714; it reads ASNSSESAPPA. Residues 772–786 are compositionally biased toward basic residues; the sequence is AHKKPPPKVPKKKVS. Residues 814 to 825 show a composition bias toward polar residues; the sequence is ARTSLTQETNNS. The segment covering 826 to 835 has biased composition (acidic residues); sequence IDDDDDDDSG. A compositionally biased stretch (basic and acidic residues) spans 848–859; that stretch reads VPAERDHIHKSK.

It belongs to the AIM3 family.

The protein localises to the membrane raft. The sequence is that of Altered inheritance of mitochondria protein 3 (AIM3) from Kluyveromyces lactis (strain ATCC 8585 / CBS 2359 / DSM 70799 / NBRC 1267 / NRRL Y-1140 / WM37) (Yeast).